The chain runs to 227 residues: Urease accessory protein UreF (227 aa).

It belongs to the UreF family. UreD, UreF and UreG form a complex that acts as a GTP-hydrolysis-dependent molecular chaperone, activating the urease apoprotein by helping to assemble the nickel containing metallocenter of UreC. The UreE protein probably delivers the nickel.

The protein localises to the cytoplasm. Functionally, required for maturation of urease via the functional incorporation of the urease nickel metallocenter. The sequence is that of Urease accessory protein UreF from Shewanella halifaxensis (strain HAW-EB4).